The following is a 510-amino-acid chain: Global transcription regulator sge1 (510 aa).

Disordered regions lie at residues 94–152, 393–438, and 469–510; these read PPGE…ASRN, HPFM…QQHS, and LGGT…MGRL. Residues 123–143 show a composition bias toward low complexity; the sequence is NTGMNGTATGANAANLSSAGS. 2 stretches are compositionally biased toward polar residues: residues 471–480 and 501–510; these read GTNTDQSQPF and PGSNNSMGRL.

Belongs to the MIT1/WOR1 family.

Its subcellular location is the nucleus. Global transcriptional regulator of pathogenicity. Differentially regulates expression of effector genes. Also required for radial growth and production of asexual conidiospores, and plays a role in mycelium pigmentation. Not required for induction of Ave1, the effector that activates resistance mediated by the Ve1 immune receptor in tomato. This is Global transcription regulator sge1 from Verticillium dahliae (strain VdLs.17 / ATCC MYA-4575 / FGSC 10137) (Verticillium wilt).